Consider the following 434-residue polypeptide: Enolase (434 aa).

Glutamine 165 contributes to the (2R)-2-phosphoglycerate binding site. Residue glutamate 207 is the Proton donor of the active site. Mg(2+) contacts are provided by aspartate 244, glutamate 291, and aspartate 318. Lysine 343, arginine 372, serine 373, and lysine 394 together coordinate (2R)-2-phosphoglycerate. Lysine 343 (proton acceptor) is an active-site residue.

It belongs to the enolase family. Mg(2+) serves as cofactor.

The protein localises to the cytoplasm. It is found in the secreted. The protein resides in the cell surface. It carries out the reaction (2R)-2-phosphoglycerate = phosphoenolpyruvate + H2O. Its pathway is carbohydrate degradation; glycolysis; pyruvate from D-glyceraldehyde 3-phosphate: step 4/5. Catalyzes the reversible conversion of 2-phosphoglycerate (2-PG) into phosphoenolpyruvate (PEP). It is essential for the degradation of carbohydrates via glycolysis. In Staphylococcus saprophyticus subsp. saprophyticus (strain ATCC 15305 / DSM 20229 / NCIMB 8711 / NCTC 7292 / S-41), this protein is Enolase.